Here is a 320-residue protein sequence, read N- to C-terminus: Cytochrome f (320 aa).

A signal peptide spans 1-35 (MQNRNTFSWVKEQMTRFISVSIMIYVITRTSIANA). The heme site is built by Tyr36, Cys56, Cys59, and His60. The helical transmembrane segment at 286 to 306 (VQGLLFFLASVILAQIFLVLK) threads the bilayer.

This sequence belongs to the cytochrome f family. In terms of assembly, the 4 large subunits of the cytochrome b6-f complex are cytochrome b6, subunit IV (17 kDa polypeptide, petD), cytochrome f and the Rieske protein, while the 4 small subunits are PetG, PetL, PetM and PetN. The complex functions as a dimer. Requires heme as cofactor.

Its subcellular location is the plastid. The protein localises to the chloroplast thylakoid membrane. Its function is as follows. Component of the cytochrome b6-f complex, which mediates electron transfer between photosystem II (PSII) and photosystem I (PSI), cyclic electron flow around PSI, and state transitions. This is Cytochrome f from Acorus calamus (Sweet flag).